A 381-amino-acid polypeptide reads, in one-letter code: Glycerol-3-phosphate dehydrogenase [NAD(+)] (381 aa).

Residues Met1–Pro27 form a disordered region. Residues Gly34 to Gly39, Phe66, and Phe122 contribute to the NAD(+) site. Lys145 provides a ligand contact to substrate. NAD(+) is bound at residue Ala178. The active-site Proton acceptor is Lys238. Residues Arg303 and Gln332 each coordinate NAD(+). Arg303 to Asn304 contributes to the substrate binding site.

Belongs to the NAD-dependent glycerol-3-phosphate dehydrogenase family.

The enzyme catalyses sn-glycerol 3-phosphate + NAD(+) = dihydroxyacetone phosphate + NADH + H(+). The polypeptide is Glycerol-3-phosphate dehydrogenase [NAD(+)] (GPD) (Pichia angusta (Yeast)).